The chain runs to 286 residues: tRNA (guanine-N(7)-)-methyltransferase (286 aa).

The segment at 1–21 (MTNPESTAIDPVAAMGTDHTE) is disordered. Residues glutamate 91, glutamate 116, asparagine 143, and aspartate 165 each contribute to the S-adenosyl-L-methionine site. Residue aspartate 165 is part of the active site. Substrate contacts are provided by residues lysine 169, aspartate 201, and 262-265 (TNFE).

The protein belongs to the class I-like SAM-binding methyltransferase superfamily. TrmB family.

The enzyme catalyses guanosine(46) in tRNA + S-adenosyl-L-methionine = N(7)-methylguanosine(46) in tRNA + S-adenosyl-L-homocysteine. Its pathway is tRNA modification; N(7)-methylguanine-tRNA biosynthesis. In terms of biological role, catalyzes the formation of N(7)-methylguanine at position 46 (m7G46) in tRNA. The chain is tRNA (guanine-N(7)-)-methyltransferase from Bifidobacterium longum (strain NCC 2705).